A 258-amino-acid polypeptide reads, in one-letter code: Snake venom serine protease BPA (258 aa).

The first 18 residues, 1-18 (MVLIRVIANLLILQLSNA), serve as a signal peptide directing secretion. The propeptide occupies 19 to 24 (QKSSEL). The region spanning 25–249 (VIGGDECNIT…YLPWIQSIIA (225 aa)) is the Peptidase S1 domain. 6 disulfide bridges follow: Cys-31–Cys-163, Cys-50–Cys-66, Cys-98–Cys-256, Cys-142–Cys-210, Cys-174–Cys-189, and Cys-200–Cys-225. N-linked (GlcNAc...) asparagine glycans are attached at residues Asn-32 and Asn-44. His-65 functions as the Charge relay system in the catalytic mechanism. Residue Asn-103 is glycosylated (N-linked (GlcNAc...) asparagine). The active-site Charge relay system is the Asp-110. Asn-121 is a glycosylation site (N-linked (GlcNAc...) asparagine). An O-linked (GalNAc...) serine glycan is attached at Ser-133. N-linked (GlcNAc...) asparagine glycans are attached at residues Asn-154 and Asn-170. Ser-204 serves as the catalytic Charge relay system. N-linked (GlcNAc...) asparagine glycosylation is found at Asn-211 and Asn-251. Thr-255 carries an O-linked (GalNAc...) threonine glycan.

It belongs to the peptidase S1 family. Snake venom subfamily. As to quaternary structure, monomer. In terms of processing, N- and O-glycosylated. The glycosylation has a stabilizing effect on the protein. However, the removal of part of the carbohydrates enhances the proteolytic activity of the SVSP towards human and rat fibrinogen. In terms of tissue distribution, expressed by the venom gland.

The protein localises to the secreted. With respect to regulation, inhibited by diisopropylfluorophosphate (DFP), but not by SBTI, Antithrombin III/heparin and BPTI, probably due to steric hindrance caused by its huge carbohydrate moietie. Its function is as follows. Snake venom serine protease that has a potent and selective fibrinogenolytic activity. Preferentially cleaves the alpha-chain (FGA) of human and rat fibrinogen at Arg-|-Gly bonds, and slowly digests the beta-chain (FGB). In vivo, completely avoids thrombus formation induced in rat, decreases the fibrinogen plasma level and prolonges the recalcification time. Possesses esterolytic and amidolytic activities. This is Snake venom serine protease BPA from Bothrops jararaca (Jararaca).